The primary structure comprises 265 residues: UPF0294 protein KPK_4510 (265 aa).

It belongs to the UPF0294 family.

The protein resides in the cytoplasm. The polypeptide is UPF0294 protein KPK_4510 (Klebsiella pneumoniae (strain 342)).